A 409-amino-acid chain; its full sequence is Elongation factor 1-gamma (409 aa).

The GST N-terminal domain maps to 2-81 (SVGTVYGKIG…YLASLNKTRA (80 aa)). The 127-residue stretch at 86 to 212 (TAEEKAKVLQ…EPLKFIDQPL (127 aa)) folds into the GST C-terminal domain. Positions 219 to 248 (NKEAAPAKKAEKKKDEKKKNAPKPQAERPA) are enriched in basic and acidic residues. The segment at 219-261 (NKEAAPAKKAEKKKDEKKKNAPKPQAERPAKPPKHPLASAPNG) is disordered. Residues 251–409 (PKHPLASAPN…REVADGKVCK (159 aa)) enclose the EF-1-gamma C-terminal domain.

In terms of assembly, EF-1 is composed of four subunits: alpha, beta, delta, and gamma.

In terms of biological role, probably plays a role in anchoring the complex to other cellular components. In Schizosaccharomyces pombe (strain 972 / ATCC 24843) (Fission yeast), this protein is Elongation factor 1-gamma (tef3).